Reading from the N-terminus, the 398-residue chain is S-adenosylmethionine synthase (398 aa).

His16 provides a ligand contact to ATP. Asp18 contacts Mg(2+). Residue Glu51 coordinates K(+). Residues Glu64 and Gln108 each coordinate L-methionine. Residues 108–118 (QSADIAQGVDA) are flexible loop. Residues 176–178 (DSK), 242–243 (KF), Asp251, 257–258 (RK), Ala274, and Lys278 contribute to the ATP site. Residue Asp251 participates in L-methionine binding. Lys282 contacts L-methionine.

Belongs to the AdoMet synthase family. As to quaternary structure, homotetramer; dimer of dimers. The cofactor is Mg(2+). Requires K(+) as cofactor.

It localises to the cytoplasm. The catalysed reaction is L-methionine + ATP + H2O = S-adenosyl-L-methionine + phosphate + diphosphate. The protein operates within amino-acid biosynthesis; S-adenosyl-L-methionine biosynthesis; S-adenosyl-L-methionine from L-methionine: step 1/1. Functionally, catalyzes the formation of S-adenosylmethionine (AdoMet) from methionine and ATP. The overall synthetic reaction is composed of two sequential steps, AdoMet formation and the subsequent tripolyphosphate hydrolysis which occurs prior to release of AdoMet from the enzyme. This chain is S-adenosylmethionine synthase, found in Rhodopseudomonas palustris (strain HaA2).